A 159-amino-acid polypeptide reads, in one-letter code: UPF0262 protein TM1040_3562 (159 aa).

The disordered stretch occupies residues 1–21 (MSRISQIELDDRNLPPPTPEI).

Belongs to the UPF0262 family.

In Ruegeria sp. (strain TM1040) (Silicibacter sp.), this protein is UPF0262 protein TM1040_3562.